The chain runs to 76 residues: Acyl carrier protein (76 aa).

The Carrier domain maps to 2 to 76 (SDIAERVKKI…QAIDYIQSHT (75 aa)). Ser-36 carries the post-translational modification O-(pantetheine 4'-phosphoryl)serine.

This sequence belongs to the acyl carrier protein (ACP) family. Post-translationally, 4'-phosphopantetheine is transferred from CoA to a specific serine of apo-ACP by AcpS. This modification is essential for activity because fatty acids are bound in thioester linkage to the sulfhydryl of the prosthetic group.

It is found in the cytoplasm. The protein operates within lipid metabolism; fatty acid biosynthesis. Functionally, carrier of the growing fatty acid chain in fatty acid biosynthesis. In Methylococcus capsulatus (strain ATCC 33009 / NCIMB 11132 / Bath), this protein is Acyl carrier protein.